The chain runs to 383 residues: Ceramide synthase 3 (383 aa).

The helical transmembrane segment at 32-52 threads the bilayer; sequence VFVKASHLYITIPYAFLLMVV. Residues 66–127 are homeobox-like; sequence NALGIKKTQH…RIRQKQNKPC (62 aa). The region spanning 130–331 is the TLC domain; sequence QKFQESCWRF…ILKMLNRCIF (202 aa). Transmembrane regions (helical) follow at residues 139-159, 174-194, 205-225, 263-283, and 302-322; these read FTFY…KPWA, LLPS…SLVF, FLAH…SWCA, LFFI…PFWI, and IFLN…GYFI. At 323 to 383 the chain is on the cytoplasmic side; it reads LKMLNRCIFT…HLIANGQHGR (61 aa). Ser-340 is modified (phosphoserine). Residues 340–383 are disordered; it reads SDNEEEEEEEEEEEAESTKGKETEYLKNGLGTNRHLIANGQHGR. Residues 342–354 show a composition bias toward acidic residues; sequence NEEEEEEEEEEEA. The segment covering 355–364 has biased composition (basic and acidic residues); sequence ESTKGKETEY.

In terms of tissue distribution, predominantly expressed in testis. In skin, present in the upper stratum spinosum and stratum granulosum (at protein level).

Its subcellular location is the endoplasmic reticulum membrane. The enzyme catalyses a very long-chain fatty acyl-CoA + a sphingoid base = an N-(very-long-chain fatty acyl)-sphingoid base + CoA + H(+). It catalyses the reaction docosanoyl-CoA + sphinganine = N-docosanoylsphinganine + CoA + H(+). The catalysed reaction is tetracosanoyl-CoA + sphinganine = N-tetracosanoylsphinganine + CoA + H(+). It carries out the reaction hexacosanoyl-CoA + sphinganine = N-hexacosanoylsphinganine + CoA + H(+). The enzyme catalyses 2-hydroxydocosanoyl-CoA + sphinganine = N-(2-hydroxydocosanoyl)-sphinganine + CoA + H(+). It catalyses the reaction 2-hydroxytetracosanoyl-CoA + sphinganine = N-(2-hydroxytetracosanoyl)-sphinganine + CoA + H(+). The catalysed reaction is an ultra-long-chain fatty acyl-CoA + a sphingoid base = an N-(ultra-long-chain-acyl)-sphingoid base + CoA + H(+). It carries out the reaction octacosanoyl-CoA + sphinganine = N-(octacosanoyl)-sphinganine + CoA + H(+). The enzyme catalyses a fatty acyl-CoA + sphing-4-enine = an N-acylsphing-4-enine + CoA + H(+). It catalyses the reaction sphinganine + octadecanoyl-CoA = N-(octadecanoyl)-sphinganine + CoA + H(+). The catalysed reaction is 2-hydroxyoctadecanoyl-CoA + sphinganine = N-(2-hydroxyoctadecanoyl)-sphinganine + CoA + H(+). The protein operates within lipid metabolism; sphingolipid metabolism. In terms of biological role, ceramide synthase that catalyzes the transfer of the acyl chain from acyl-CoA to a sphingoid base, with high selectivity toward very- and ultra-long-chain fatty acyl-CoA (chain length greater than C22). N-acylates sphinganine and sphingosine bases to form dihydroceramides and ceramides in de novo synthesis and salvage pathways, respectively. It is crucial for the synthesis of ultra-long-chain ceramides in the epidermis, to maintain epidermal lipid homeostasis and terminal differentiation. This is Ceramide synthase 3 from Mus musculus (Mouse).